Here is a 527-residue protein sequence, read N- to C-terminus: Glucose-6-phosphate isomerase (527 aa).

The active-site Proton donor is the glutamate 347. Active-site residues include histidine 378 and lysine 493.

Belongs to the GPI family.

The protein resides in the cytoplasm. The catalysed reaction is alpha-D-glucose 6-phosphate = beta-D-fructose 6-phosphate. It participates in carbohydrate biosynthesis; gluconeogenesis. The protein operates within carbohydrate degradation; glycolysis; D-glyceraldehyde 3-phosphate and glycerone phosphate from D-glucose: step 2/4. In terms of biological role, catalyzes the reversible isomerization of glucose-6-phosphate to fructose-6-phosphate. This is Glucose-6-phosphate isomerase from Chlamydia caviae (strain ATCC VR-813 / DSM 19441 / 03DC25 / GPIC) (Chlamydophila caviae).